A 449-amino-acid polypeptide reads, in one-letter code: Delta(8)-fatty-acid desaturase 2 (449 aa).

A Cytochrome b5 heme-binding domain is found at 7–91 (KRYVTSEDLK…VRDHHVSDVS (85 aa)). Heme is bound by residues H42 and H65. Transmembrane regions (helical) follow at residues 113–133 (VTLY…YGVL) and 138–158 (IWAH…SAYV). Residues 160–164 (HDSGH) carry the Histidine box-1 motif. A helical transmembrane segment spans residues 176 to 196 (LIQLLSGNCLTGISIAWWKWT). The Histidine box-2 motif lies at 197 to 201 (HNAHH). Helical transmembrane passes span 255 to 275 (FYPV…LLLF), 284 to 304 (ALNI…VSFL), and 311 to 331 (FIFV…FCLN). The Histidine box-3 motif lies at 374 to 378 (QLEHH).

Belongs to the fatty acid desaturase type 1 family. The cofactor is Fe cation. In terms of tissue distribution, highly expressed in flowers and siliques. Expressed at low levels in roots, leaves and stems.

Its subcellular location is the endoplasmic reticulum membrane. It catalyses the reaction an N-acyl-(4R)-4-hydroxysphinganine + 2 Fe(II)-[cytochrome b5] + O2 + 2 H(+) = a (4R,8E)-4-hydroxysphingenine ceramide + 2 Fe(III)-[cytochrome b5] + 2 H2O. The catalysed reaction is an N-acyl-(4R)-4-hydroxysphinganine + 2 Fe(II)-[cytochrome b5] + O2 + 2 H(+) = a (4R,8Z)-4-hydroxysphing-8-enine ceramide + 2 Fe(III)-[cytochrome b5] + 2 H2O. Plays a major role as delta(8)-fatty-acid desaturase which introduces a double bond at the 8-position in the long-chain base (LCB) of ceramides with or without a hydroxy group at the 4-position. The enzyme produces both the 8E and 8Z isomers (in a 4:1 ratio). This structural modification contributes to the quantitative partitioning of ceramides between the two major sphingolipid classes, glucosylceramides and glycosylinositolphosphoryl ceramides. Sphingolipids are important membrane components involved in environmental stress responses, such as resistance to chilling, and act as cell signaling molecules. The protein is Delta(8)-fatty-acid desaturase 2 (SLD2) of Arabidopsis thaliana (Mouse-ear cress).